We begin with the raw amino-acid sequence, 342 residues long: Small ribosomal subunit protein uS2 (342 aa).

Positions 235–283 (EENAPFEQDEPRKPSQKPKQNRPENKPRFDKQAPRAAAKPEVKAEVKPE) are disordered. Residues 255–283 (NRPENKPRFDKQAPRAAAKPEVKAEVKPE) are compositionally biased toward basic and acidic residues.

It belongs to the universal ribosomal protein uS2 family.

The protein is Small ribosomal subunit protein uS2 of Acholeplasma laidlawii (strain PG-8A).